The sequence spans 217 residues: Peptide methionine sulfoxide reductase MsrA (217 aa).

The segment at 16 to 39 (EALKGGRHPVLESPQPHTVLGTPI) is disordered. Residue cysteine 56 is part of the active site.

The protein belongs to the MsrA Met sulfoxide reductase family.

It catalyses the reaction L-methionyl-[protein] + [thioredoxin]-disulfide + H2O = L-methionyl-(S)-S-oxide-[protein] + [thioredoxin]-dithiol. It carries out the reaction [thioredoxin]-disulfide + L-methionine + H2O = L-methionine (S)-S-oxide + [thioredoxin]-dithiol. Its function is as follows. Has an important function as a repair enzyme for proteins that have been inactivated by oxidation. Catalyzes the reversible oxidation-reduction of methionine sulfoxide in proteins to methionine. The polypeptide is Peptide methionine sulfoxide reductase MsrA (Corynebacterium efficiens (strain DSM 44549 / YS-314 / AJ 12310 / JCM 11189 / NBRC 100395)).